The chain runs to 1328 residues: Myb-binding protein 1A (1328 aa).

Residues 1–22 are disordered; it reads MESRDPAQPMSPGEATQSGARP. The interval 1–582 is interaction with MYB; sequence MESRDPAQPM…WDRMLQTLKE (582 aa). A Phosphoserine modification is found at S11. N6-acetyllysine is present on residues K71 and K158. Short sequence motifs (nuclear export signal) lie at residues 240–258 and 263–281; these read SDEN…ASSV and KLPA…EDKF. The interval 698-753 is disordered; that stretch reads SEDENDRVVVTDDSDERRLKGAEDKSEEGEDNRSSESEEESEGEESEEEERDGDVD. The span at 703–721 shows a compositional bias: basic and acidic residues; the sequence is DRVVVTDDSDERRLKGAED. Positions 734 to 752 are enriched in acidic residues; it reads SEEESEGEESEEEERDGDV. A Phosphoserine modification is found at S775. A disordered region spans residues 1146–1292; the sequence is RPKLEKKDAK…KKGVLGKSPL (147 aa). A compositionally biased stretch (basic and acidic residues) spans 1147–1156; that stretch reads PKLEKKDAKE. K1148 is covalently cross-linked (Glycyl lysine isopeptide (Lys-Gly) (interchain with G-Cter in SUMO2)). The tract at residues 1151–1328 is required for nuclear and nucleolar localization; it reads KKDAKEIPSA…KAQVRKAGKP (178 aa). Phosphoserine occurs at positions 1159 and 1163. A compositionally biased stretch (basic residues) spans 1166-1184; it reads SKKRKKKGFLPETKKRKKR. A Phosphoserine modification is found at S1186. A phosphothreonine mark is found at T1190 and T1196. S1207 is subject to Phosphoserine. Positions 1209–1218 are enriched in basic residues; sequence GRKKRNRTKA. Phosphoserine is present on S1232. Residue T1239 is modified to Phosphothreonine. Phosphoserine is present on S1241. Residue T1244 is modified to Phosphothreonine. S1248 and S1267 each carry phosphoserine. Phosphothreonine is present on T1269. Phosphoserine occurs at positions 1290 and 1303. The interval 1306–1328 is disordered; the sequence is IRSPSLLQSGAKKKAQVRKAGKP. R1307 bears the Citrulline mark. A phosphoserine mark is found at S1308, S1310, and S1314. Residues 1316-1328 show a composition bias toward basic residues; the sequence is AKKKAQVRKAGKP.

It belongs to the MYBBP1A family. Binds to and represses JUN and MYB via the leucine zipper regions present in these proteins. Also binds to and represses PPARGC1A: this interaction is abrogated when PPARGC1A is phosphorylated by MAPK1/ERK. Binds to and stimulates transcription by AHR. Binds to KPNA2. Interacts with CLOCK and CRY1. Component of the B-WICH complex, at least composed of SMARCA5/SNF2H, BAZ1B/WSTF, SF3B1, DEK, MYO1C, ERCC6, MYBBP1A and DDX21. Citrullinated by PADI4.

The protein localises to the cytoplasm. It localises to the nucleus. The protein resides in the nucleolus. In terms of biological role, may activate or repress transcription via interactions with sequence specific DNA-binding proteins. Repression may be mediated at least in part by histone deacetylase activity (HDAC activity). Acts as a corepressor and in concert with CRY1, represses the transcription of the core circadian clock component PER2. Preferentially binds to dimethylated histone H3 'Lys-9' (H3K9me2) on the PER2 promoter. Has a role in rRNA biogenesis together with PWP1. The sequence is that of Myb-binding protein 1A (MYBBP1A) from Homo sapiens (Human).